A 374-amino-acid chain; its full sequence is Zinc finger CCCH domain-containing protein 15 homolog (374 aa).

2 C3H1-type zinc fingers span residues 89 to 116 (DPKS…HDLA) and 167 to 197 (YFLE…HCLP).

Belongs to the ZC3H15/TMA46 family.

The sequence is that of Zinc finger CCCH domain-containing protein 15 homolog from Caenorhabditis briggsae.